A 602-amino-acid polypeptide reads, in one-letter code: Serine/threonine-protein phosphatase 2A 56 kDa regulatory subunit delta isoform (602 aa).

Residues 1 to 13 (MPYKLKKEKEPPK) are compositionally biased toward basic and acidic residues. Residues 1 to 96 (MPYKLKKEKE…QSSSRFNLSK (96 aa)) are disordered. 5 repeat units span residues 37-38 (QP), 39-40 (QP), 41-42 (QP), 43-44 (QP), and 45-46 (QP). The segment at 37-52 (QPQPQPQPQPQAQSQP) is 8 X 2 AA approximate tandem repeats of Q-P. Residues 46-55 (PQAQSQPPSS) show a composition bias toward low complexity. The 6; approximate repeat unit spans residues 47-48 (QA). The stretch at 49-50 (QS) is one 7; approximate repeat. Repeat unit 8 spans residues 51–52 (QP). Phosphothreonine is present on T63. A phosphoserine mark is found at S88, S89, and S90. The SH3-binding; class I signature appears at 523–530 (RAPPPLPP). The Nuclear localization signal motif lies at 548 to 565 (KRTVETEAVQMLKDIKKE). A phosphoserine mark is found at S573 and S598.

It belongs to the phosphatase 2A regulatory subunit B56 family. PP2A consists of a common heterodimeric core enzyme, composed of a 36 kDa catalytic subunit (subunit C) and a 65 kDa constant regulatory subunit (PR65 or subunit A), that associates with a variety of regulatory subunits. Proteins that associate with the core dimer include three families of regulatory subunits B (the R2/B/PR55/B55, R3/B''/PR72/PR130/PR59 and R5/B'/B56 families), the 48 kDa variable regulatory subunit, viral proteins, and cell signaling molecules. Interacts with the PP2A A subunit PPP2R1A. Interacts with SGO1. Interacts with ADCY8. As to expression, isoform Delta-2 is widely expressed. Isoform Delta-1 is highly expressed in brain.

It localises to the cytoplasm. The protein localises to the nucleus. Its function is as follows. The B regulatory subunit might modulate substrate selectivity and catalytic activity, and might also direct the localization of the catalytic enzyme to a particular subcellular compartment. The polypeptide is Serine/threonine-protein phosphatase 2A 56 kDa regulatory subunit delta isoform (PPP2R5D) (Homo sapiens (Human)).